We begin with the raw amino-acid sequence, 279 residues long: Probable endonuclease 4 (279 aa).

9 residues coordinate Zn(2+): H67, H107, E144, D177, H180, H214, D227, H229, and E259.

Belongs to the AP endonuclease 2 family. Zn(2+) is required as a cofactor.

The enzyme catalyses Endonucleolytic cleavage to 5'-phosphooligonucleotide end-products.. Its function is as follows. Endonuclease IV plays a role in DNA repair. It cleaves phosphodiester bonds at apurinic or apyrimidinic (AP) sites, generating a 3'-hydroxyl group and a 5'-terminal sugar phosphate. The sequence is that of Probable endonuclease 4 from Sulfurihydrogenibium sp. (strain YO3AOP1).